A 127-amino-acid chain; its full sequence is Glycine cleavage system H protein (127 aa).

The Lipoyl-binding domain maps to 22 to 104 (KVRIGITDFA…YEKAWMIVVE (83 aa)). The residue at position 63 (Lys-63) is an N6-lipoyllysine.

It belongs to the GcvH family. As to quaternary structure, the glycine cleavage system is composed of four proteins: P, T, L and H. (R)-lipoate serves as cofactor.

Its function is as follows. The glycine cleavage system catalyzes the degradation of glycine. The H protein shuttles the methylamine group of glycine from the P protein to the T protein. Is also involved in protein lipoylation via its role as an octanoyl/lipoyl carrier protein intermediate. This is Glycine cleavage system H protein from Geobacillus sp. (strain WCH70).